The sequence spans 896 residues: Alanine--tRNA ligase (896 aa).

Residues His-580, His-584, Cys-683, and His-687 each contribute to the Zn(2+) site.

This sequence belongs to the class-II aminoacyl-tRNA synthetase family. It depends on Zn(2+) as a cofactor.

It localises to the cytoplasm. The enzyme catalyses tRNA(Ala) + L-alanine + ATP = L-alanyl-tRNA(Ala) + AMP + diphosphate. Its function is as follows. Catalyzes the attachment of alanine to tRNA(Ala) in a two-step reaction: alanine is first activated by ATP to form Ala-AMP and then transferred to the acceptor end of tRNA(Ala). Also edits incorrectly charged Ser-tRNA(Ala) and Gly-tRNA(Ala) via its editing domain. This Mycolicibacterium smegmatis (strain ATCC 700084 / mc(2)155) (Mycobacterium smegmatis) protein is Alanine--tRNA ligase.